A 259-amino-acid chain; its full sequence is UPF0246 protein NMB0895 (259 aa).

The protein belongs to the UPF0246 family.

This Neisseria meningitidis serogroup B (strain ATCC BAA-335 / MC58) protein is UPF0246 protein NMB0895.